Reading from the N-terminus, the 72-residue chain is Translation initiation factor IF-1 (72 aa).

The S1-like domain maps to 1-72 (MAKDDVIEVD…DKGRITFRYK (72 aa)).

It belongs to the IF-1 family. In terms of assembly, component of the 30S ribosomal translation pre-initiation complex which assembles on the 30S ribosome in the order IF-2 and IF-3, IF-1 and N-formylmethionyl-tRNA(fMet); mRNA recruitment can occur at any time during PIC assembly.

The protein localises to the cytoplasm. Its function is as follows. One of the essential components for the initiation of protein synthesis. Stabilizes the binding of IF-2 and IF-3 on the 30S subunit to which N-formylmethionyl-tRNA(fMet) subsequently binds. Helps modulate mRNA selection, yielding the 30S pre-initiation complex (PIC). Upon addition of the 50S ribosomal subunit IF-1, IF-2 and IF-3 are released leaving the mature 70S translation initiation complex. This chain is Translation initiation factor IF-1, found in Nitratiruptor sp. (strain SB155-2).